Consider the following 515-residue polypeptide: Maturase K (515 aa).

The protein belongs to the intron maturase 2 family. MatK subfamily.

It is found in the plastid. The protein localises to the chloroplast. In terms of biological role, usually encoded in the trnK tRNA gene intron. Probably assists in splicing its own and other chloroplast group II introns. This is Maturase K from Picea pungens (Colorado spruce).